A 568-amino-acid polypeptide reads, in one-letter code: Proline--tRNA ligase (568 aa).

The protein belongs to the class-II aminoacyl-tRNA synthetase family. ProS type 1 subfamily. As to quaternary structure, homodimer.

The protein resides in the cytoplasm. The enzyme catalyses tRNA(Pro) + L-proline + ATP = L-prolyl-tRNA(Pro) + AMP + diphosphate. Catalyzes the attachment of proline to tRNA(Pro) in a two-step reaction: proline is first activated by ATP to form Pro-AMP and then transferred to the acceptor end of tRNA(Pro). As ProRS can inadvertently accommodate and process non-cognate amino acids such as alanine and cysteine, to avoid such errors it has two additional distinct editing activities against alanine. One activity is designated as 'pretransfer' editing and involves the tRNA(Pro)-independent hydrolysis of activated Ala-AMP. The other activity is designated 'posttransfer' editing and involves deacylation of mischarged Ala-tRNA(Pro). The misacylated Cys-tRNA(Pro) is not edited by ProRS. The protein is Proline--tRNA ligase of Halothermothrix orenii (strain H 168 / OCM 544 / DSM 9562).